Reading from the N-terminus, the 433-residue chain is D-amino acid dehydrogenase (433 aa).

3-17 serves as a coordination point for FAD; it reads VLVLGSGVIGTASAY.

The protein belongs to the DadA oxidoreductase family. The cofactor is FAD.

It carries out the reaction a D-alpha-amino acid + A + H2O = a 2-oxocarboxylate + AH2 + NH4(+). Its pathway is amino-acid degradation; D-alanine degradation; NH(3) and pyruvate from D-alanine: step 1/1. In terms of biological role, oxidative deamination of D-amino acids. In Pseudomonas putida (strain W619), this protein is D-amino acid dehydrogenase.